Here is a 317-residue protein sequence, read N- to C-terminus: Lipase 1 (317 aa).

A signal peptide spans 1-18 (MLLKRLCFAALFSLSMVG). C19 is lipidated: N-palmitoyl cysteine. C19 carries S-diacylglycerol cysteine lipidation. In terms of domain architecture, AB hydrolase-1 spans 69-296 (PLLLIHGFGG…MEDVGHVPMV (228 aa)). H74 is a catalytic residue. Residue S142 is the Nucleophile of the active site. Catalysis depends on charge relay system residues E270 and H292.

Its subcellular location is the cell outer membrane. It carries out the reaction a triacylglycerol + H2O = a diacylglycerol + a fatty acid + H(+). This is Lipase 1 (lip1) from Psychrobacter immobilis.